Here is a 297-residue protein sequence, read N- to C-terminus: Release factor glutamine methyltransferase (297 aa).

S-adenosyl-L-methionine-binding positions include 134-138 (GTGSG), Asp157, and Asn200. 200–203 (NPPY) is a substrate binding site.

Belongs to the protein N5-glutamine methyltransferase family. PrmC subfamily.

The enzyme catalyses L-glutaminyl-[peptide chain release factor] + S-adenosyl-L-methionine = N(5)-methyl-L-glutaminyl-[peptide chain release factor] + S-adenosyl-L-homocysteine + H(+). Its function is as follows. Methylates the class 1 translation termination release factors RF1/PrfA and RF2/PrfB on the glutamine residue of the universally conserved GGQ motif. The sequence is that of Release factor glutamine methyltransferase from Bradyrhizobium diazoefficiens (strain JCM 10833 / BCRC 13528 / IAM 13628 / NBRC 14792 / USDA 110).